The primary structure comprises 114 residues: uncharacterized protein (114 aa).

This is an uncharacterized protein from Archaeoglobus fulgidus (strain ATCC 49558 / DSM 4304 / JCM 9628 / NBRC 100126 / VC-16).